A 242-amino-acid chain; its full sequence is MSKSRLTVFSFVRRFLLRLMVVLAVFWGGGIALFSVAPVPFSAVMVERQVSAWLHGNFRYVAHSDWVSMDQISPWMGLAVIAAEDQKFPEHWGFDVASIEKALAHNERNENRIRGASTISQQTAKNLFLWDGRSWVRKGLEAGLTLGIETVWSKKRILTVYLNIAEFGDGVFGVEAAAQRYFHKPASKLTRSEAALLAAVLPNPRRFKVSAPSGYVHSRQAWILRQMYQLGGEPFMQQHQLD.

A helical transmembrane segment spans residues 19-39 (LMVVLAVFWGGGIALFSVAPV).

The protein belongs to the glycosyltransferase 51 family.

It is found in the cell inner membrane. It carries out the reaction [GlcNAc-(1-&gt;4)-Mur2Ac(oyl-L-Ala-gamma-D-Glu-L-Lys-D-Ala-D-Ala)](n)-di-trans,octa-cis-undecaprenyl diphosphate + beta-D-GlcNAc-(1-&gt;4)-Mur2Ac(oyl-L-Ala-gamma-D-Glu-L-Lys-D-Ala-D-Ala)-di-trans,octa-cis-undecaprenyl diphosphate = [GlcNAc-(1-&gt;4)-Mur2Ac(oyl-L-Ala-gamma-D-Glu-L-Lys-D-Ala-D-Ala)](n+1)-di-trans,octa-cis-undecaprenyl diphosphate + di-trans,octa-cis-undecaprenyl diphosphate + H(+). The protein operates within cell wall biogenesis; peptidoglycan biosynthesis. Its function is as follows. Peptidoglycan polymerase that catalyzes glycan chain elongation from lipid-linked precursors. This is Biosynthetic peptidoglycan transglycosylase from Escherichia coli (strain ATCC 8739 / DSM 1576 / NBRC 3972 / NCIMB 8545 / WDCM 00012 / Crooks).